Here is a 199-residue protein sequence, read N- to C-terminus: MAISKNLPILKNHFRKHWQERVKVHFDQAGKKVSRRNARAARAAKIAPRPLDLLRPVVRAPTVKYNRKVRAGRGFTLAEVKAAGLTAAYARTIGIAVDHRRQNRNQEIFDANVQRLKEYQSKIIVFPRDGKAPEAEQVLSAAATFPIAQPATDVEARAVQDNGESAFRTLRLARSEKKFRGIREKRAREKAEAEAEKKK.

Phosphothreonine occurs at positions 144 and 152.

It belongs to the eukaryotic ribosomal protein eL13 family. In terms of assembly, component of the large ribosomal subunit (LSU). Mature yeast ribosomes consist of a small (40S) and a large (60S) subunit. The 40S small subunit contains 1 molecule of ribosomal RNA (18S rRNA) and 33 different proteins (encoded by 57 genes). The large 60S subunit contains 3 rRNA molecules (25S, 5.8S and 5S rRNA) and 46 different proteins (encoded by 81 genes).

Its subcellular location is the cytoplasm. Functionally, component of the ribosome, a large ribonucleoprotein complex responsible for the synthesis of proteins in the cell. The small ribosomal subunit (SSU) binds messenger RNAs (mRNAs) and translates the encoded message by selecting cognate aminoacyl-transfer RNA (tRNA) molecules. The large subunit (LSU) contains the ribosomal catalytic site termed the peptidyl transferase center (PTC), which catalyzes the formation of peptide bonds, thereby polymerizing the amino acids delivered by tRNAs into a polypeptide chain. The nascent polypeptides leave the ribosome through a tunnel in the LSU and interact with protein factors that function in enzymatic processing, targeting, and the membrane insertion of nascent chains at the exit of the ribosomal tunnel. The chain is Large ribosomal subunit protein eL13B from Saccharomyces cerevisiae (strain ATCC 204508 / S288c) (Baker's yeast).